The sequence spans 202 residues: Superoxide dismutase [Mn], mitochondrial (202 aa).

The N-terminal 5 residues, histidine 1–methionine 5, are a transit peptide targeting the mitochondrion. A Mn(2+)-binding site is contributed by histidine 31. A 3'-nitrotyrosine modification is found at tyrosine 39. Lysine 49 is subject to N6-acetyllysine; alternate. The residue at position 49 (lysine 49) is an N6-succinyllysine; alternate. Position 79 (histidine 79) interacts with Mn(2+). Residue lysine 95 is modified to N6-acetyllysine. Lysine 103 and lysine 111 each carry N6-acetyllysine; alternate. Residues lysine 103 and lysine 111 each carry the N6-succinyllysine; alternate modification. Mn(2+)-binding residues include aspartate 164 and histidine 168. Residue lysine 183 is modified to N6-acetyllysine.

Belongs to the iron/manganese superoxide dismutase family. In terms of assembly, homotetramer. Requires Mn(2+) as cofactor. Nitrated under oxidative stress. Nitration coupled with oxidation inhibits the catalytic activity. In terms of processing, acetylation at Lys-122 decreases enzymatic activity. Deacetylated by SIRT3 upon exposure to ionizing radiations or after long fasting. Post-translationally, polyubiquitinated; leading to proteasomal degradation. Deubiquitinated by USP36 which increases protein stability.

Its subcellular location is the mitochondrion matrix. The catalysed reaction is 2 superoxide + 2 H(+) = H2O2 + O2. Destroys superoxide anion radicals which are normally produced within the cells and which are toxic to biological systems. The protein is Superoxide dismutase [Mn], mitochondrial (SOD2) of Oryctolagus cuniculus (Rabbit).